An 81-amino-acid chain; its full sequence is Small ribosomal subunit protein bS16 (81 aa).

This sequence belongs to the bacterial ribosomal protein bS16 family.

This chain is Small ribosomal subunit protein bS16, found in Nautilia profundicola (strain ATCC BAA-1463 / DSM 18972 / AmH).